A 415-amino-acid chain; its full sequence is Histidine--tRNA ligase (415 aa).

Belongs to the class-II aminoacyl-tRNA synthetase family. As to quaternary structure, homodimer.

It is found in the cytoplasm. It catalyses the reaction tRNA(His) + L-histidine + ATP = L-histidyl-tRNA(His) + AMP + diphosphate + H(+). This is Histidine--tRNA ligase from Clostridium botulinum (strain ATCC 19397 / Type A).